Here is a 185-residue protein sequence, read N- to C-terminus: Large ribosomal subunit protein uL5 (185 aa).

This sequence belongs to the universal ribosomal protein uL5 family. As to quaternary structure, part of the 50S ribosomal subunit; part of the 5S rRNA/L5/L18/L25 subcomplex. Contacts the 5S rRNA and the P site tRNA. Forms a bridge to the 30S subunit in the 70S ribosome.

In terms of biological role, this is one of the proteins that bind and probably mediate the attachment of the 5S RNA into the large ribosomal subunit, where it forms part of the central protuberance. In the 70S ribosome it contacts protein S13 of the 30S subunit (bridge B1b), connecting the 2 subunits; this bridge is implicated in subunit movement. Contacts the P site tRNA; the 5S rRNA and some of its associated proteins might help stabilize positioning of ribosome-bound tRNAs. In Bradyrhizobium sp. (strain ORS 278), this protein is Large ribosomal subunit protein uL5.